A 229-amino-acid chain; its full sequence is Clathrin light chain B (229 aa).

2 stretches are compositionally biased toward low complexity: residues 1–17 (MAED…GAPE) and 45–58 (GAPA…AQPG). A disordered region spans residues 1 to 70 (MAEDFGFFSS…SGAGSEDMST (70 aa)). 2 positions are modified to phosphoserine: S11 and S13. The tract at residues 93–155 (ADRLTQEPES…QVEKNKINNR (63 aa)) is involved in binding clathrin heavy chain. At T187 the chain carries Phosphothreonine. C199 and C209 are oxidised to a cystine. K204 bears the N6-acetyllysine mark. S217 is subject to Phosphoserine.

The protein belongs to the clathrin light chain family. In terms of assembly, clathrin coats are formed from molecules containing 3 heavy chains and 3 light chains. Interacts (via N-terminus) with HIP1. Interacts with HIP1R.

The protein resides in the cytoplasmic vesicle membrane. It is found in the membrane. The protein localises to the coated pit. Functionally, clathrin is the major protein of the polyhedral coat of coated pits and vesicles. The sequence is that of Clathrin light chain B (Cltb) from Mus musculus (Mouse).